The following is a 1150-amino-acid chain: Cell division cycle and apoptosis regulator protein 1 (1150 aa).

Residues 1–249 are interaction with AR; the sequence is MAQFGGQKNP…TQPQPQSLLQ (249 aa). 2 disordered regions span residues 124 to 146 and 285 to 354; these read PTAQITVSYPTPRSSQQQTQPQK and IVSQ…SPRR. Over residues 134–146 the composition is skewed to low complexity; that stretch reads TPRSSQQQTQPQK. The interaction with GATA2 stretch occupies residues 203 to 660; that stretch reads QRIQTLPNQN…RALSSKGLKS (458 aa). 2 stretches are compositionally biased toward basic and acidic residues: residues 293–334 and 341–352; these read RRLD…ERSP and ERSPRRERERSP. At S456 the chain carries Phosphoserine. Positions 594–618 form a coiled coil; it reads KQQLVEKLQGERKEADGEQDEEEKD. Residues 600-638 are disordered; it reads KLQGERKEADGEQDEEEKDDGEAKEISTPTHWSKLDPKT. The segment covering 610-621 has biased composition (acidic residues); it reads GEQDEEEKDDGE. The residue at position 627 (T627) is a Phosphothreonine. Residues 636–670 form the SAP domain; that stretch reads PKTMKVNDLRKELESRALSSKGLKSQLIARLTKQL. Residue K637 forms a Glycyl lysine isopeptide (Lys-Gly) (interchain with G-Cter in ubiquitin) linkage. The tract at residues 643–1150 is interaction with GATA1; it reads DLRKELESRA…QKSKENGASV (508 aa). T667 carries the post-translational modification Phosphothreonine. 4 stretches are compositionally biased toward basic and acidic residues: residues 673–687, 694–713, 796–817, and 832–855; these read EEQKEEQKELEKSEK, DRKSEDDKEEEERKRQEEIE, KEDKKEKDKKSKKDERKDKKEE, and SGDDKDKKEDRDERKKEDKRKDDS. Disordered stretches follow at residues 673–713 and 796–915; these read EEQK…EEIE and KEDK…EKEK. Residues S685 and S697 each carry the phosphoserine modification. Positions 856 to 889 are enriched in acidic residues; sequence KDDDETEEDNNQDEYDPMEAEEAEDEEDDRDEEE. At T861 the chain carries Phosphothreonine. Over residues 890–915 the composition is skewed to basic and acidic residues; sequence MTKRDDKRDINRYCKERPSKDKEKEK. A Glycyl lysine isopeptide (Lys-Gly) (interchain with G-Cter in SUMO1); alternate cross-link involves residue K1012. Residue K1012 forms a Glycyl lysine isopeptide (Lys-Gly) (interchain with G-Cter in SUMO2); alternate linkage. The stretch at 1033–1114 forms a coiled coil; that stretch reads DVGSLLQKLE…LQFENQMNKT (82 aa). Glycyl lysine isopeptide (Lys-Gly) (interchain with G-Cter in SUMO2) cross-links involve residues K1067 and K1135.

As to quaternary structure, directly interacts with ESR1, NR3C1 and p53/TP53. Interacts (via N-terminus) with CALCOCO1. Interacts with MED1. Interacts with GATA1. Interacts with AR and GATA2. Expressed in various epithelial cancer cell lines, including breast, colon, prostate, pancreatic and leukemia. Expression is regulated by growth factors.

It localises to the cytoplasm. Its subcellular location is the perinuclear region. Associates with components of the Mediator and p160 coactivator complexes that play a role as intermediaries transducing regulatory signals from upstream transcriptional activator proteins to basal transcription machinery at the core promoter. Recruited to endogenous nuclear receptor target genes in response to the appropriate hormone. Also functions as a p53 coactivator. May thus play an important role in transcriptional regulation. May be involved in apoptosis signaling in the presence of the reinoid CD437. Apoptosis induction involves sequestration of 14-3-3 protein(s) and mediated altered expression of multiple cell cycle regulatory genes including MYC, CCNB1 and CDKN1A. Plays a role in cell cycle progression and/or cell proliferation. In association with CALCOCO1 enhances GATA1- and MED1-mediated transcriptional activation from the gamma-globin promoter during erythroid differentiation of K562 erythroleukemia cells. Can act as a both a coactivator and corepressor of AR-mediated transcription. Contributes to chromatin looping and AR transcription complex assembly by stabilizing AR-GATA2 association on chromatin and facilitating MED1 and RNA polymerase II recruitment to AR-binding sites. May play an important role in the growth and tumorigenesis of prostate cancer cells. The polypeptide is Cell division cycle and apoptosis regulator protein 1 (CCAR1) (Homo sapiens (Human)).